A 1958-amino-acid polypeptide reads, in one-letter code: Echinoderm microtubule-associated protein-like 6 (1958 aa).

10 WD repeats span residues 59–100 (GHND…TVSI), 104–145 (VHTH…LLAS), 148–187 (GHSDRIFDISWDPYQPNRMVSCGVKHIKFWTLCGNALTAK), 195–233 (GDLQTILCLACAKEDITYSGALNGDIYVWKGLTLVRTIQ), 235–273 (AHSAGIFSLYACEEGFATGGRDGCIRLWDTDFKPITKID), 280–321 (GYKG…LILQ), 323–362 (HCEGELWALALHPKKPLAVTGSDDRSVRLWSLADHALIAR), 364–403 (NMEEAVRSVSFSPDGSQLALGMKDGSFIVLRVRDMTEVVH), 406–445 (DRKEVIHEMKFSPDGSYLAVGSNDGPVDVYAVAQRYKKIG), and 561–601 (GHSA…VSNG). The tract at residues 604–627 (ETTPQEGGADSYSEESDSDFSDVP) is disordered. Residues 615 to 627 (YSEESDSDFSDVP) are compositionally biased toward acidic residues. WD repeat units lie at residues 725–766 (GHDD…CLSL), 770–811 (HHQR…KIAT), 814–853 (GHKDKIFVVKCNPQHADKLVTVGIKHIKFWQQAGGGFTSK), 861–900 (GKLETMMCVSYGRMEDLVFSGAATGDIFIWKDVLLLKTVK), 901–940 (AHDGPVFAMYALDKGFVTGGKDGIVELWDDMFERCLKTYA), 996–1035 (HMEGEVWGLAAHPLLPICATVSDDKTLRIWELSSQHRMLA), 1038–1077 (KLKKGGRCCAFSPDGKALAVGLNDGSFLVVNADTVEDMLS), 1080–1120 (HRKE…RVGI), 1191–1230 (SDVTDVNAANLTKDGSLLATGDDFGFVKLFSYPVKGQHAR), and 1236–1276 (GHSA…TQES). The span at 1322–1337 (KPHQQLKEVSMEERPP) shows a compositional bias: basic and acidic residues. The segment at 1322–1352 (KPHQQLKEVSMEERPPVSRAAPQPEKLQKNN) is disordered. 10 WD repeats span residues 1412 to 1456 (EHTD…TLSM), 1460 to 1501 (FHTK…KVAS), 1504 to 1543 (GHLERIFVVEFRPDSDTQFVSVGVKHMKFWTLAGSALLYK), 1553 to 1591 (AKMQTMLSVAFGANNLTFTGAINGDVYVWKEHFLIRLVA), 1593 to 1638 (AHTG…CRAF), 1685 to 1724 (HMEGEIWGLATHPSKDMFISASNDGTARIWDLADKKLLNK), 1726 to 1767 (NLGH…GKKR), 1768 to 1807 (DRKSAIQDIRISPDNRFLAVGSSEQTVDFYDLTQGTSLNR), 1880 to 1919 (ADKADVNCACVTHAGLNIVTGDDFGLLKLFDFPCTEKFAK), and 1925 to 1958 (GHSAHVTNIRFSSDDKYVVSTGGDDCSVFVWRCL).

It belongs to the WD repeat EMAP family.

The protein resides in the cytoplasm. Its subcellular location is the cytoskeleton. Its function is as follows. May modify the assembly dynamics of microtubules, such that microtubules are slightly longer, but more dynamic. In Mus musculus (Mouse), this protein is Echinoderm microtubule-associated protein-like 6 (Eml6).